A 74-amino-acid chain; its full sequence is Translation initiation factor IF-1 (74 aa).

Residues Met1–Lys72 enclose the S1-like domain.

Belongs to the IF-1 family. As to quaternary structure, component of the 30S ribosomal translation pre-initiation complex which assembles on the 30S ribosome in the order IF-2 and IF-3, IF-1 and N-formylmethionyl-tRNA(fMet); mRNA recruitment can occur at any time during PIC assembly.

Its subcellular location is the cytoplasm. One of the essential components for the initiation of protein synthesis. Stabilizes the binding of IF-2 and IF-3 on the 30S subunit to which N-formylmethionyl-tRNA(fMet) subsequently binds. Helps modulate mRNA selection, yielding the 30S pre-initiation complex (PIC). Upon addition of the 50S ribosomal subunit IF-1, IF-2 and IF-3 are released leaving the mature 70S translation initiation complex. The chain is Translation initiation factor IF-1 from Synechococcus sp. (strain JA-3-3Ab) (Cyanobacteria bacterium Yellowstone A-Prime).